Here is a 112-residue protein sequence, read N- to C-terminus: Protein FAM32A (112 aa).

Positions 23–58 (TKRKKKKKDKDKAKLLEAMGTSKKNEEEKRRGLDKR) are disordered. Positions 45–58 (KKNEEEKRRGLDKR) are enriched in basic and acidic residues.

Belongs to the FAM32 family.

The protein localises to the nucleus. In terms of biological role, may induce G2 arrest and apoptosis. May also increase cell sensitivity to apoptotic stimuli. The polypeptide is Protein FAM32A (FAM32A) (Bos taurus (Bovine)).